Consider the following 353-residue polypeptide: 41 kDa protein (353 aa).

A disordered region spans residues 132-197 (QSSHASALEQ…DNNSSDTIKD (66 aa)). The segment covering 157–169 (LDNKGKSDSENCN) has biased composition (basic and acidic residues).

The polypeptide is 41 kDa protein (Lactobacillus helveticus (Lactobacillus suntoryeus)).